A 604-amino-acid chain; its full sequence is Sulfite reductase [NADPH] flavoprotein alpha-component (604 aa).

In terms of domain architecture, Flavodoxin-like spans 66 to 204; that stretch reads VTVLSASQTG…AADGWTDNIA (139 aa). Residues 72 to 77, 119 to 122, and 155 to 164 each bind FMN; these read SQTGNA, STQG, and LGDSSYPNFC. One can recognise an FAD-binding FR-type domain in the interval 239 to 453; it reads ADPFPAALLA…VERNDGFRLP (215 aa). FAD contacts are provided by residues threonine 327, glutamine 361, 391 to 394, 409 to 411, and 424 to 427; these read RLYS, TVG, and GGAS. NADP(+)-binding positions include 524–525, 530–534, and aspartate 566; these read SR and KIYVQ. An FAD-binding site is contributed by tyrosine 604.

The protein belongs to the NADPH-dependent sulphite reductase flavoprotein subunit CysJ family. In the N-terminal section; belongs to the flavodoxin family. This sequence in the C-terminal section; belongs to the flavoprotein pyridine nucleotide cytochrome reductase family. Alpha(8)-beta(8). The alpha component is a flavoprotein, the beta component is a hemoprotein. FAD serves as cofactor. The cofactor is FMN.

It carries out the reaction hydrogen sulfide + 3 NADP(+) + 3 H2O = sulfite + 3 NADPH + 4 H(+). Its pathway is sulfur metabolism; hydrogen sulfide biosynthesis; hydrogen sulfide from sulfite (NADPH route): step 1/1. Functionally, component of the sulfite reductase complex that catalyzes the 6-electron reduction of sulfite to sulfide. This is one of several activities required for the biosynthesis of L-cysteine from sulfate. The flavoprotein component catalyzes the electron flow from NADPH -&gt; FAD -&gt; FMN to the hemoprotein component. The protein is Sulfite reductase [NADPH] flavoprotein alpha-component of Neisseria meningitidis serogroup A / serotype 4A (strain DSM 15465 / Z2491).